The sequence spans 301 residues: Phosphoribosylaminoimidazole-succinocarboxamide synthase (301 aa).

Belongs to the SAICAR synthetase family.

The enzyme catalyses 5-amino-1-(5-phospho-D-ribosyl)imidazole-4-carboxylate + L-aspartate + ATP = (2S)-2-[5-amino-1-(5-phospho-beta-D-ribosyl)imidazole-4-carboxamido]succinate + ADP + phosphate + 2 H(+). It functions in the pathway purine metabolism; IMP biosynthesis via de novo pathway; 5-amino-1-(5-phospho-D-ribosyl)imidazole-4-carboxamide from 5-amino-1-(5-phospho-D-ribosyl)imidazole-4-carboxylate: step 1/2. This Syntrophobacter fumaroxidans (strain DSM 10017 / MPOB) protein is Phosphoribosylaminoimidazole-succinocarboxamide synthase.